A 163-amino-acid chain; its full sequence is Phosphopantetheine adenylyltransferase (163 aa).

Thr11 contributes to the substrate binding site. Residues 11 to 12 (TF) and His19 contribute to the ATP site. The substrate site is built by Lys43, Leu75, and Arg89. ATP contacts are provided by residues 90 to 92 (GLR), Glu100, and 125 to 131 (YSFISST).

It belongs to the bacterial CoaD family. As to quaternary structure, homohexamer. Requires Mg(2+) as cofactor.

It localises to the cytoplasm. The catalysed reaction is (R)-4'-phosphopantetheine + ATP + H(+) = 3'-dephospho-CoA + diphosphate. It participates in cofactor biosynthesis; coenzyme A biosynthesis; CoA from (R)-pantothenate: step 4/5. In terms of biological role, reversibly transfers an adenylyl group from ATP to 4'-phosphopantetheine, yielding dephospho-CoA (dPCoA) and pyrophosphate. The chain is Phosphopantetheine adenylyltransferase from Acinetobacter baumannii (strain SDF).